The chain runs to 432 residues: Mitochondrial distribution and morphology protein 12 (432 aa).

One can recognise an SMP-LTD domain in the interval 1–432 (MSIEVDWRAA…VFPSFWTFLI (432 aa)). Disordered stretches follow at residues 182–273 (WTDP…PRMR) and 354–377 (QQEARGQDDRPWSSADPTASPKRQ). The span at 214–234 (TSNPTSRPSTSSTLPSHPSAS) shows a compositional bias: low complexity. Basic and acidic residues-rich tracts occupy residues 243 to 253 (TGKEHGSLAED) and 355 to 364 (QEARGQDDRP).

It belongs to the MDM12 family. As to quaternary structure, component of the ER-mitochondria encounter structure (ERMES) or MDM complex, composed of mmm1, mdm10, mdm12 and mdm34. A mmm1 homodimer associates with one molecule of mdm12 on each side in a pairwise head-to-tail manner, and the SMP-LTD domains of mmm1 and mdm12 generate a continuous hydrophobic tunnel for phospholipid trafficking.

The protein resides in the mitochondrion outer membrane. It localises to the endoplasmic reticulum membrane. Functionally, component of the ERMES/MDM complex, which serves as a molecular tether to connect the endoplasmic reticulum (ER) and mitochondria. Components of this complex are involved in the control of mitochondrial shape and protein biogenesis, and function in nonvesicular lipid trafficking between the ER and mitochondria. Mdm12 is required for the interaction of the ER-resident membrane protein mmm1 and the outer mitochondrial membrane-resident beta-barrel protein mdm10. The mdm12-mmm1 subcomplex functions in the major beta-barrel assembly pathway that is responsible for biogenesis of all mitochondrial outer membrane beta-barrel proteins, and acts in a late step after the SAM complex. The mdm10-mdm12-mmm1 subcomplex further acts in the TOM40-specific pathway after the action of the mdm12-mmm1 complex. Essential for establishing and maintaining the structure of mitochondria and maintenance of mtDNA nucleoids. The chain is Mitochondrial distribution and morphology protein 12 from Aspergillus oryzae (strain ATCC 42149 / RIB 40) (Yellow koji mold).